The primary structure comprises 561 residues: MCGIWALFGSDECLSVQCLSAMKIAHRGPDAFRFENVNGFTNCCFGFHRLAVVDQLYGMQPIRVKKFPYLWLCYNGEIYNFKQLQEQFGFEYQTLVDGEVILHLYNRGGIEQTASMLDGVFAFILLDTANRKVFLARDTYGVRPLFKVLTDDGFLGVCSEAKGLINLKHSTSLFPKVEPFLPGHYEVLDLKPSGKVVSVEVVKFHSYKDEPLHAACDTVGNLPSGFDLETVKSNIRVLFENAVRKRLMAHRRIGCLLSGGLDSSLVAAVLLKLMKEMNIKYPLQTFAIGMENSPDLLAARKVAAHIGSEHHEVIFNSEEGIQAVEEVIFSLETYDITTVRASIGMYLVSKYIRKKTDSVVIFSGEGSDELTQGYIYFHKAPSPEEAAEESERLLKELYLFDVLRADRTTAAHGLELRVPFLDHRFTSYYLSLPAELRIPKNGIEKYLLRQSFEDSNLLPKEILWRPKEAFSDGIASVKKSWFSILQDYIDQQVDDLLLEKAAEKYPFNPPRTKESYYYRQIFEKHYPGRSSWLPHYWMPRWVEATDPSARTLKHYKSAIQE.

Residue C2 is the For GATase activity of the active site. Residues 2–191 (CGIWALFGSD…PGHYEVLDLK (190 aa)) enclose the Glutamine amidotransferase type-2 domain. Residues 49 to 53 (RLAVV), 75 to 77 (NGE), and D97 each bind L-glutamine. In terms of domain architecture, Asparagine synthetase spans 213–536 (HAACDTVGNL…PGRSSWLPHY (324 aa)). ATP is bound by residues L256, I288, and 363–364 (SG).

The enzyme catalyses L-aspartate + L-glutamine + ATP + H2O = L-asparagine + L-glutamate + AMP + diphosphate + H(+). Its pathway is amino-acid biosynthesis; L-asparagine biosynthesis; L-asparagine from L-aspartate (L-Gln route): step 1/1. This is Asparagine synthetase [glutamine-hydrolyzing] (ASNS) from Gallus gallus (Chicken).